The sequence spans 380 residues: Cytosolic acyl coenzyme A thioester hydrolase (380 aa).

The HotDog ACOT-type 1 domain maps to Pro-50–Lys-168. Asn-66 is an active-site residue. N6-acetyllysine occurs at positions 168 and 198. The region spanning Ser-224 to Glu-338 is the HotDog ACOT-type 2 domain. Asp-255 is an active-site residue. An N6-acetyllysine modification is found at Lys-283. The disordered stretch occupies residues Glu-350–Pro-380. A compositionally biased stretch (basic and acidic residues) spans Asp-353 to Gly-363.

In terms of assembly, homohexamer. In terms of tissue distribution, isoform 4 is expressed exclusively in brain.

The protein resides in the cytoplasm. It localises to the cytosol. The protein localises to the mitochondrion. It catalyses the reaction hexadecanoyl-CoA + H2O = hexadecanoate + CoA + H(+). It carries out the reaction octanoyl-CoA + H2O = octanoate + CoA + H(+). The catalysed reaction is dodecanoyl-CoA + H2O = dodecanoate + CoA + H(+). The enzyme catalyses (9Z)-octadecenoyl-CoA + H2O = (9Z)-octadecenoate + CoA + H(+). It catalyses the reaction tetradecanoyl-CoA + H2O = tetradecanoate + CoA + H(+). It carries out the reaction decanoyl-CoA + H2O = decanoate + CoA + H(+). The catalysed reaction is octadecanoyl-CoA + H2O = octadecanoate + CoA + H(+). The protein operates within lipid metabolism; fatty acid metabolism. Its function is as follows. Catalyzes the hydrolysis of acyl-CoAs into free fatty acids and coenzyme A (CoASH), regulating their respective intracellular levels. Preferentially hydrolyzes palmitoyl-CoA, but has a broad specificity acting on other fatty acyl-CoAs with chain-lengths of C8-C18. May play an important physiological function in brain. This chain is Cytosolic acyl coenzyme A thioester hydrolase (ACOT7), found in Homo sapiens (Human).